The following is a 151-amino-acid chain: IFN signaling evasion protein OPG029 (151 aa).

It belongs to the orthopoxvirus OPG029 family. Interacts with host TANK, TBKBP1 and AZI2; these interactions prevent interferon production. Interacts with host STAT2.

In terms of biological role, prevents establishment of cellular antiviral state by blocking virus-induced phosphorylation and activation of interferon regulatory factors 3/IRF3 and 7/IRF7, transcription factors critical for the induction of interferons alpha and beta. This blockage is produced through the inhibition of host TBK1, by binding host TBK1 adapter proteins TBKBP1 and AZI2, thereby producing a strong inhibition of the phosphorylation and activation of IRF3 and IRF7. Also acts as an inhibitor of the cellular response to type I IFN by interacting with host STAT2. Mechanistically, exerts its inhibitory effect after host ISGF3 complex (composed of STAT1, STAT2 and IRF9) binding to the interferon stimulated response element (ISRE). The chain is IFN signaling evasion protein OPG029 (OPG029) from Vaccinia virus (strain Western Reserve) (VACV).